The primary structure comprises 507 residues: MSIFAYSILAGLAPLLSSSIPFFTLRNRNINASVFHILLCISAGLLFAVASLELIPESMNLALRSFEESTKTQTSLKSTTTKTTTTTTTIGNIKLQKSFISNSEDSLNEFHSLDNEINKPPIEGLNLNNLNQATNLDNNEEDNDNLDNDGENEIENDHDHDHQEDEGGDNDHDHESEEKKEFLKIPMYGIGFGFAILIIVESIFSSIDGGGGGGGHHSHSHGSLSSSSSNDVISDYISNNNSNNINNNDDDNNNNNNNNDDDDDSVELLERNVVNKDNSNNINNINNNNDDEDIIVINKSIENTPNIASPVMNKDNNNNDKDKNRNSNKSDIKNSGSINNGNNSGNNNNNNKSKLTITTFIALSIHSFVDGVVISSAFSSSPHVGARVALAIVIHKIPDGLVLSSLILSQKKFNSGIFSNPFFYFLLISCMTPLGSFISSFLFGGLSLSSGAFVLGFGAGTFIYITSTAILPEILSNQIVKKSTSLFSIFLGYLLFIFLDSQFHGAH.

Residues 1 to 18 form the signal peptide; it reads MSIFAYSILAGLAPLLSS. The N-linked (GlcNAc...) asparagine glycan is linked to N31. A helical membrane pass occupies residues 35 to 55; it reads FHILLCISAGLLFAVASLELI. Positions 124 to 179 are disordered; it reads GLNLNNLNQATNLDNNEEDNDNLDNDGENEIENDHDHDHQEDEGGDNDHDHESEEK. Residues 125–137 show a composition bias toward low complexity; sequence LNLNNLNQATNLD. The segment covering 138 to 154 has biased composition (acidic residues); sequence NNEEDNDNLDNDGENEI. Residues 155-179 show a composition bias toward basic and acidic residues; that stretch reads ENDHDHDHQEDEGGDNDHDHESEEK. A helical membrane pass occupies residues 185-205; the sequence is IPMYGIGFGFAILIIVESIFS. Residues 209–264 form a disordered region; sequence GGGGGGGHHSHSHGSLSSSSSNDVISDYISNNNSNNINNNDDDNNNNNNNNDDDDD. Residues 221–258 are compositionally biased toward low complexity; it reads HGSLSSSSSNDVISDYISNNNSNNINNNDDDNNNNNNN. N-linked (GlcNAc...) asparagine glycosylation is found at N240, N298, N328, N342, and N351. Residues 305–350 are disordered; sequence PNIASPVMNKDNNNNDKDKNRNSNKSDIKNSGSINNGNNSGNNNNN. Over residues 317-332 the composition is skewed to basic and acidic residues; the sequence is NNNDKDKNRNSNKSDI. Over residues 333–350 the composition is skewed to low complexity; the sequence is KNSGSINNGNNSGNNNNN. The next 5 helical transmembrane spans lie at 355–375, 388–408, 422–442, 451–471, and 486–506; these read LTIT…VVIS, VALA…SLIL, FFYF…SSFL, GAFV…TAIL, and LFSI…FHGA.

The protein belongs to the ZIP transporter (TC 2.A.5) family.

It localises to the membrane. May transport divalent cations. May participate, with dstA, in the regulation of the differentiation of stalk cells during development. This is Protein zntA (zntA) from Dictyostelium discoideum (Social amoeba).